The primary structure comprises 570 residues: Sulfite reductase [NADPH] hemoprotein beta-component (570 aa).

[4Fe-4S] cluster is bound by residues Cys-433, Cys-439, Cys-478, and Cys-482. Cys-482 lines the siroheme pocket.

Belongs to the nitrite and sulfite reductase 4Fe-4S domain family. In terms of assembly, alpha(8)-beta(8). The alpha component is a flavoprotein, the beta component is a hemoprotein. Siroheme is required as a cofactor. It depends on [4Fe-4S] cluster as a cofactor.

It carries out the reaction hydrogen sulfide + 3 NADP(+) + 3 H2O = sulfite + 3 NADPH + 4 H(+). The protein operates within sulfur metabolism; hydrogen sulfide biosynthesis; hydrogen sulfide from sulfite (NADPH route): step 1/1. Its function is as follows. Component of the sulfite reductase complex that catalyzes the 6-electron reduction of sulfite to sulfide. This is one of several activities required for the biosynthesis of L-cysteine from sulfate. This Aeromonas hydrophila subsp. hydrophila (strain ATCC 7966 / DSM 30187 / BCRC 13018 / CCUG 14551 / JCM 1027 / KCTC 2358 / NCIMB 9240 / NCTC 8049) protein is Sulfite reductase [NADPH] hemoprotein beta-component.